The following is a 500-amino-acid chain: Lycopene beta cyclase, chloroplastic (500 aa).

The transit peptide at 1–81 (MDTLLKTPNN…ELPMYDPSKG (81 aa)) directs the protein to the chloroplast. 86–114 (LAVVGGGPAGLAVAQQVSEAGLSVCSIDP) contacts NAD(+).

The protein belongs to the lycopene cyclase family.

The protein localises to the plastid. Its subcellular location is the chloroplast. The enzyme catalyses a carotenoid psi-end group = a carotenoid beta-end derivative. Its pathway is carotenoid biosynthesis; beta-carotene biosynthesis. The protein operates within carotenoid biosynthesis; beta-zeacarotene biosynthesis. Its function is as follows. Catalyzes the double cyclization reaction which converts lycopene to beta-carotene and neurosporene to beta-zeacarotene. The sequence is that of Lycopene beta cyclase, chloroplastic (LCY1) from Solanum lycopersicum (Tomato).